Reading from the N-terminus, the 192-residue chain is Elongation factor P (192 aa).

The tract at residues 133 to 157 (EVTETTPGVKGDTAQGGDKPATLES) is disordered.

It belongs to the elongation factor P family.

It is found in the cytoplasm. It functions in the pathway protein biosynthesis; polypeptide chain elongation. In terms of biological role, involved in peptide bond synthesis. Stimulates efficient translation and peptide-bond synthesis on native or reconstituted 70S ribosomes in vitro. Probably functions indirectly by altering the affinity of the ribosome for aminoacyl-tRNA, thus increasing their reactivity as acceptors for peptidyl transferase. The protein is Elongation factor P of Salinibacter ruber (strain DSM 13855 / M31).